The primary structure comprises 443 residues: Thymidine phosphorylase (443 aa).

The protein belongs to the thymidine/pyrimidine-nucleoside phosphorylase family. Homodimer.

The catalysed reaction is thymidine + phosphate = 2-deoxy-alpha-D-ribose 1-phosphate + thymine. The protein operates within pyrimidine metabolism; dTMP biosynthesis via salvage pathway; dTMP from thymine: step 1/2. Functionally, the enzymes which catalyze the reversible phosphorolysis of pyrimidine nucleosides are involved in the degradation of these compounds and in their utilization as carbon and energy sources, or in the rescue of pyrimidine bases for nucleotide synthesis. In Sodalis glossinidius (strain morsitans), this protein is Thymidine phosphorylase.